Consider the following 1993-residue polypeptide: Otoferlin (1993 aa).

The C2 1 domain occupies 1 to 98 (MALIVHLKTV…VEENRVEVSD (98 aa)). Residues 1–1959 (MALIVHLKTV…IKYLICTRYK (1959 aa)) lie on the Cytoplasmic side of the membrane. The disordered stretch occupies residues 127-212 (PWDDGDFLGD…KEEPQRQDEP (86 aa)). A compositionally biased stretch (acidic residues) spans 129-145 (DDGDFLGDESLQEEEKD). 2 stretches are compositionally biased toward basic and acidic residues: residues 163 to 186 (PGEKSFRSKGKEKTKGGRDGEHKA) and 202 to 211 (HKEEPQRQDE). C2 domains follow at residues 251 to 372 (KRSK…HKWA) and 415 to 546 (IEGN…FLPT). A disordered region spans residues 654-708 (NYGNEVDGTSRPQRPRPRKEPGDEEEVDLIQNSSDDEGDEAGDLASVSSTPPMRP). Positions 675 to 695 (GDEEEVDLIQNSSDDEGDEAG) are enriched in acidic residues. The stretch at 807–836 (RERLKSCMRELESMGQQAKSLRAQVKRHTV) forms a coiled coil. 2 C2 domains span residues 959–1084 (LHSF…PPRF) and 1131–1257 (RGPI…ANWN). Positions 991, 997, 1053, 1055, and 1061 each coordinate Ca(2+). 2 disordered regions span residues 1294-1318 (AEDEKERKKKKKKGPSEEAEEEEPD) and 1339-1398 (LRQH…EKKK). Acidic residues predominate over residues 1348–1357 (DLEEKEEMDS). Basic and acidic residues predominate over residues 1366–1379 (KNKEKSRAAKEEKK). C2 domains are found at residues 1460–1589 (LPED…ATCG) and 1710–1861 (DMPA…KQCT). Positions 1504, 1510, 1559, 1561, 1567, 1832, 1835, and 1838 each coordinate Ca(2+). A helical transmembrane segment spans residues 1960–1980 (WLIIKIVLALLGLLMLALFLY). Residues 1981–1993 (SLPGYMVKKLLGA) are Extracellular-facing.

Belongs to the ferlin family. Interacts with SNAP25; the interaction is direct. Interacts with STX1; the interaction is direct. Interacts with RAB8B. It depends on Ca(2+) as a cofactor. Isoform 1 is expressed in the cochlea and brain. Expressed in cerebellum (Purkinje cells), hippocampus (granule cells of the dentate gyrus and in pyramidal cells of the CA1-CA3 region) and cortex (stellate and pyramidal cells). Expressed in hair cells of vestibular organs such as the saccule, utricle and crista ampullari. Expressed in the cochlear inner and outer cells (IHCs and OHCs) (at protein level). Expressed in brain: brainstem, cerebellum (granules cells and Purkinje cell layer), cortex (layers IV and V), inferior colliculus, superior colliculus and hippocampus (granule cells of the dentate gyrus and in pyramidal cells of the CA1-CA3 region).

The protein localises to the cytoplasmic vesicle. The protein resides in the secretory vesicle. Its subcellular location is the synaptic vesicle membrane. It is found in the basolateral cell membrane. It localises to the endoplasmic reticulum membrane. The protein localises to the golgi apparatus membrane. The protein resides in the presynaptic cell membrane. Its subcellular location is the cell membrane. Key calcium ion sensor involved in the Ca(2+)-triggered synaptic vesicle-plasma membrane fusion and in the control of neurotransmitter release at these output synapses. Interacts in a calcium-dependent manner to the presynaptic SNARE proteins at ribbon synapses of cochlear inner hair cells (IHCs) to trigger exocytosis of neurotransmitter. Also essential to synaptic exocytosis in immature outer hair cells (OHCs). May also play a role within the recycling of endosomes. The polypeptide is Otoferlin (Otof) (Rattus norvegicus (Rat)).